The sequence spans 56 residues: Large ribosomal subunit protein bL32 (56 aa).

Positions 1–19 (MAVPKRKKSRSTTRHRRAQ) are enriched in basic residues. Residues 1–22 (MAVPKRKKSRSTTRHRRAQWKT) form a disordered region.

This sequence belongs to the bacterial ribosomal protein bL32 family.

This chain is Large ribosomal subunit protein bL32, found in Cutibacterium acnes (strain DSM 16379 / KPA171202) (Propionibacterium acnes).